Consider the following 561-residue polypeptide: Putative transport protein YbjL (561 aa).

Transmembrane regions (helical) follow at residues 8–28 (LLNG…LCLG), 32–52 (LGSV…LLGQ), 66–86 (FMLF…SIFF), 94–114 (MLAL…GKLF), and 158–178 (NLSL…IVGA). RCK C-terminal domains lie at 200-288 (RGLD…SFRN) and 292-373 (VFDR…RIGF). The next 5 membrane-spanning stretches (helical) occupy residues 383–403 (LLAF…TFQF), 406–426 (FSFG…LGFL), 447–467 (FGLM…INNG), 475–495 (MLIA…LFGA), and 537–557 (GTYA…VIIW).

It belongs to the AAE transporter (TC 2.A.81) family. YbjL subfamily.

It localises to the cell membrane. The protein is Putative transport protein YbjL of Salmonella choleraesuis (strain SC-B67).